The primary structure comprises 471 residues: Tryptophanase (471 aa).

An N6-(pyridoxal phosphate)lysine modification is found at Lys270.

This sequence belongs to the beta-eliminating lyase family. Homotetramer. It depends on pyridoxal 5'-phosphate as a cofactor.

It catalyses the reaction L-tryptophan + H2O = indole + pyruvate + NH4(+). It functions in the pathway amino-acid degradation; L-tryptophan degradation via pyruvate pathway; indole and pyruvate from L-tryptophan: step 1/1. This Histophilus somni (strain 129Pt) (Haemophilus somnus) protein is Tryptophanase.